The following is a 308-amino-acid chain: Probable lipid phosphate phosphatase 4 (308 aa).

6 consecutive transmembrane segments (helical) span residues 26–46 (WLIL…EPFH), 66–86 (IPMW…FIVY), 93–113 (VYDL…TGVT), 162–182 (SFPS…AWYL), 193–213 (GHVA…LIGI), and 226–246 (VFAG…HFFP). Residues 274 to 308 (MTRTGSRGMLGNDVEPGNSASSPHDRHRESTDSDF) are disordered. The segment covering 296–308 (PHDRHRESTDSDF) has biased composition (basic and acidic residues).

The protein belongs to the PA-phosphatase related phosphoesterase family.

The protein localises to the membrane. The protein is Probable lipid phosphate phosphatase 4 (LPP4) of Arabidopsis thaliana (Mouse-ear cress).